Reading from the N-terminus, the 369-residue chain is Tyrosyl-DNA phosphodiesterase 2 (369 aa).

The span at 1-17 (MELEARAEPRSPRAGRG) shows a compositional bias: basic and acidic residues. Disordered regions lie at residues 1–26 (MELEARAEPRSPRAGRGEEEEDEDEE) and 80–117 (AAAAGGGSAGPGSCIDLTADDTASNTSSSGADSKQQDD). A compositionally biased stretch (low complexity) spans 99 to 112 (DDTASNTSSSGADS). An interaction with 5' end of substrate DNA region spans residues 127–131 (NIDGL). Mg(2+) is bound by residues Asp-129 and Glu-159. Residues 233–238 (HLESTR) are interaction with 5' end of substrate DNA. Asp-269 (proton donor/acceptor) is an active-site residue. An interaction with 5' end of substrate DNA region spans residues 271 to 273 (NLR).

Belongs to the CCR4/nocturin family. TTRAP/TDP2 subfamily. The cofactor is Mg(2+). Mn(2+) serves as cofactor.

The protein resides in the nucleus. It is found in the PML body. In terms of biological role, DNA repair enzyme that can remove a variety of covalent adducts from DNA through hydrolysis of a 5'-phosphodiester bond, giving rise to DNA with a free 5' phosphate. Catalyzes the hydrolysis of dead-end complexes between DNA and the topoisomerase 2 (TOP2) active site tyrosine residue. Hydrolyzes 5'-phosphoglycolates on protruding 5' ends on DNA double-strand breaks (DSBs) due to DNA damage by radiation and free radicals. The 5'-tyrosyl DNA phosphodiesterase activity can enable the repair of TOP2-induced DSBs without the need for nuclease activity, creating a 'clean' DSB with 5'-phosphate termini that are ready for ligation. Also has 3'-tyrosyl DNA phosphodiesterase activity, but less efficiently and much slower than TDP1. This chain is Tyrosyl-DNA phosphodiesterase 2 (TDP2), found in Gallus gallus (Chicken).